A 156-amino-acid chain; its full sequence is Low-salt glycan biosynthesis protein Agl8 (156 aa).

Substrate is bound by residues 14-15 (RI) and Arg-47. Positions 25-156 (ANVPLVSVDL…YVERYLDALD (132 aa)) constitute a Nudix hydrolase domain. The Mg(2+) site is built by Gly-60, Glu-80, and Gln-130. The Nudix box signature appears at 61–82 (GTVFKNETLTDALYRVADEELG).

It belongs to the Nudix hydrolase family. It depends on Mg(2+) as a cofactor.

Its pathway is protein modification; protein glycosylation. The protein operates within cell surface structure biogenesis; S-layer biogenesis. In terms of biological role, nudix hydrolase involved in N-glycan biosynthetic pathway that takes place under low-salt conditions (1.75 M instead of 3.4 M). Participates in the formation of the tetrasaccharide present at 'Asn-532' of S-layer glycoprotein Csg, consisting of a sulfated hexose, 2 hexoses and rhamnose. Mediates attachment of sugar 3 in the tetrasaccharide. This chain is Low-salt glycan biosynthesis protein Agl8 (agl8), found in Haloferax volcanii (strain ATCC 29605 / DSM 3757 / JCM 8879 / NBRC 14742 / NCIMB 2012 / VKM B-1768 / DS2) (Halobacterium volcanii).